The following is a 1455-amino-acid chain: Membrane-associated guanylate kinase, WW and PDZ domain-containing protein 2 (1455 aa).

A PDZ 1 domain is found at 17 to 101 (ESVIGRNPEG…PLRLKCVKQG (85 aa)). Residues 109-283 (RHYLNLRFQK…APVYSQPEEL (175 aa)) form the Guanylate kinase-like domain. A disordered region spans residues 205–306 (PGATPSAEGK…DNEEPDPLPD (102 aa)). Residues 241–252 (VVNGNGVVVTPE) are compositionally biased toward low complexity. Positions 281-296 (EELKEQMDDTKPTKPE) are enriched in basic and acidic residues. WW domains are found at residues 302–335 (DPLP…DPRL) and 348–381 (NELP…NPVL). An interaction with DDN region spans residues 302–381 (DPLPDNWEMA…RRTQFENPVL (80 aa)). Y362 bears the Phosphotyrosine mark. PDZ domains are found at residues 426 to 510 (STTL…CRGY) and 605 to 683 (TLTI…HRGG). S686 carries the phosphoserine modification. One can recognise a PDZ 4 domain in the interval 778–860 (DVHLRRMESG…NGQVNLTVRR (83 aa)). Phosphotyrosine is present on Y827. The interval 869–913 (CPENGRSPGSVSTHHSSPRSDYATYTNSNHAAPSSNASPPEGFAS) is disordered. A phosphoserine mark is found at S884 and S885. Positions 895 to 908 (NSNHAAPSSNASPP) are enriched in low complexity. The PDZ 5 domain occupies 920 to 1010 (DVVIHRKENE…SVTLRIIPQE (91 aa)). Over residues 1011–1040 (ELNSPTSAPSSEKQSPMAQQSPLAQQSPLA) the composition is skewed to polar residues. The segment at 1011 to 1136 (ELNSPTSAPS…PDTRQYPLSD (126 aa)) is disordered. S1014 is subject to Phosphoserine. Positions 1067-1083 (NSYRSEVKARQDVKPDI) are enriched in basic and acidic residues. Residues 1147–1229 (TVDMEKGAKG…RVRLLLKRGT (83 aa)) form the PDZ 6 domain. Residues 1231-1455 (QVPEYDEPAP…LKPGASAASR (225 aa)) form a disordered region. The segment covering 1238 to 1249 (PAPWSSPAAAAP) has biased composition (low complexity). The span at 1287-1299 (DIKREHDVRKPKE) shows a compositional bias: basic and acidic residues. Low complexity-rich tracts occupy residues 1346-1363 (EARA…AARA), 1399-1412 (ALEA…RAGP), and 1422-1433 (APARKAAVAPGP).

Belongs to the MAGUK family. As to quaternary structure, interacts (via its WW domains) with DRPLA. Interacts (via its second PDZ domain) with PTEN (via unphosphorylated C-terminus); this interaction diminishes the degradation rate of PTEN. Interacts (via guanylate kinase domain) with DLGAP1. Interacts (via the PDZ domains) with GRIN2A, GRID2 and NLGN1. Interacts with CTNND2, CTNNB1, MAGUIN-1, ACVR2A, SMAD2 and SMAD3. Part of a complex consisting of MAGI2/ARIP1, ACVR2A, ACVR1B and SMAD3. May interact with HTR2A. Interacts with IGSF9, RAPGEF2 and HTR4. Identified in a complex with ACTN4, CASK, IQGAP1, NPHS1, SPTAN1 and SPTBN1. Found in a complex, at least composed of KIDINS220, MAGI2, NTRK1 and RAPGEF2; the complex is mainly formed at late endosomes in a NGF-dependent manner. Interacts with RAPGEF2; the interaction occurs before or after nerve growth factor (NGF) stimulation. Interacts (via PDZ domain) with KIDINS220 (via C-terminal domain). Interacts with DDN. Interacts with DLL1. Found in a complex with IGSF9B and NLGN2; the interaction with IGSF9B is mediated via the PDZ 5 and PDZ 6 domains, while the interaction with NLGN2 is mediated via the WW1, WW2 and PDZ2 domains. Interacts (via PDZ 6 domain) with USH1G (via SAM domain); the interaction is triggered by phosphorylation of USH1G by CK2 and negatively regulates MAGI2-mediated endocytosis. In terms of tissue distribution, specifically expressed in brain.

The protein resides in the cytoplasm. Its subcellular location is the late endosome. It localises to the synapse. It is found in the synaptosome. The protein localises to the cell membrane. The protein resides in the cytoskeleton. Its subcellular location is the microtubule organizing center. It localises to the centrosome. It is found in the cell projection. The protein localises to the cilium. The protein resides in the centriole. Its subcellular location is the photoreceptor inner segment. It localises to the photoreceptor outer segment. Seems to act as a scaffold molecule at synaptic junctions by assembling neurotransmitter receptors and cell adhesion proteins. Plays a role in nerve growth factor (NGF)-induced recruitment of RAPGEF2 to late endosomes and neurite outgrowth. May play a role in regulating activin-mediated signaling in neuronal cells. Enhances the ability of PTEN to suppress AKT1 activation. Plays a role in receptor-mediated clathrin-dependent endocytosis which is required for ciliogenesis. The protein is Membrane-associated guanylate kinase, WW and PDZ domain-containing protein 2 (MAGI2) of Homo sapiens (Human).